The sequence spans 170 residues: Large ribosomal subunit protein uL11 (170 aa).

It belongs to the universal ribosomal protein uL11 family. As to quaternary structure, part of the ribosomal stalk of the 50S ribosomal subunit. Interacts with L10 and the large rRNA to form the base of the stalk. L10 forms an elongated spine to which L12 dimers bind in a sequential fashion forming a multimeric L10(L12)X complex.

Its function is as follows. Forms part of the ribosomal stalk which helps the ribosome interact with GTP-bound translation factors. This Saccharolobus islandicus (strain M.14.25 / Kamchatka #1) (Sulfolobus islandicus) protein is Large ribosomal subunit protein uL11.